Here is a 303-residue protein sequence, read N- to C-terminus: Protein translocase subunit SecF (303 aa).

6 helical membrane-spanning segments follow: residues 28–48 (SIIL…NFGI), 140–160 (IEAG…YIWV), 164–184 (WYFG…ALGF), 194–214 (LSTI…SVVI), 246–266 (ILTV…GGEA), and 272–292 (VLVF…SAPI).

The protein belongs to the SecD/SecF family. SecF subfamily. Forms a complex with SecD. Part of the essential Sec protein translocation apparatus which comprises SecA, SecYEG and auxiliary proteins SecDF-YajC and YidC.

The protein localises to the cell inner membrane. Functionally, part of the Sec protein translocase complex. Interacts with the SecYEG preprotein conducting channel. SecDF uses the proton motive force (PMF) to complete protein translocation after the ATP-dependent function of SecA. The protein is Protein translocase subunit SecF of Rickettsia bellii (strain OSU 85-389).